Here is a 470-residue protein sequence, read N- to C-terminus: Tryptophan synthase beta chain 1, chloroplastic (470 aa).

Residues 1-10 (MAASGTSATF) show a composition bias toward polar residues. The interval 1-24 (MAASGTSATFRASVSSAPSSSSQL) is disordered. Residues 12 to 22 (ASVSSAPSSSS) are compositionally biased toward low complexity. At lysine 165 the chain carries N6-(pyridoxal phosphate)lysine.

This sequence belongs to the TrpB family. Tetramer of two alpha and two beta chains. Requires pyridoxal 5'-phosphate as cofactor.

It localises to the plastid. The protein localises to the chloroplast. It carries out the reaction (1S,2R)-1-C-(indol-3-yl)glycerol 3-phosphate + L-serine = D-glyceraldehyde 3-phosphate + L-tryptophan + H2O. It participates in amino-acid biosynthesis; L-tryptophan biosynthesis; L-tryptophan from chorismate: step 5/5. Functionally, the beta subunit is responsible for the synthesis of L-tryptophan from indole and L-serine. This Arabidopsis thaliana (Mouse-ear cress) protein is Tryptophan synthase beta chain 1, chloroplastic (TSB1).